The sequence spans 288 residues: Dysbindin protein homolog (288 aa).

Positions 147-239 (AQLQNSSQVL…QRERQAVFDD (93 aa)) form a coiled coil.

It belongs to the dysbindin family. In terms of assembly, component of the biogenesis of lysosome-related organelles complex-1 (BLOC-1) composed of Blos1, Blos2, Blos3, Blos4, Dysb, Muted, Pldn and Snapin. Interacts with Pldn and Snapin.

Its function is as follows. Component of the biogenesis of lysosome-related organelles complex-1 (BLOC-1) involved in pigment granule biogenesis and membrane trafficking in synapses. In response to high synaptic activity at neuromuscular junctions, stabilizes Pldn protein levels and, together with Pldn, plays a role in promoting efficient synaptic vesicle recycling and re-formation through early endosomes. The chain is Dysbindin protein homolog from Drosophila melanogaster (Fruit fly).